Consider the following 806-residue polypeptide: Lon protease (806 aa).

The Lon N-terminal domain occupies 13–206 (LPMMPIRDVV…RVAEMLDIEI (194 aa)). ATP is bound at residue 356–363 (GPPGVGKT). In terms of domain architecture, Lon proteolytic spans 599 to 780 (KNEIGAATGL…DEVLKIALER (182 aa)). Catalysis depends on residues S686 and K729.

It belongs to the peptidase S16 family. In terms of assembly, homohexamer. Organized in a ring with a central cavity.

Its subcellular location is the cytoplasm. It carries out the reaction Hydrolysis of proteins in presence of ATP.. Its function is as follows. ATP-dependent serine protease that mediates the selective degradation of mutant and abnormal proteins as well as certain short-lived regulatory proteins. Required for cellular homeostasis and for survival from DNA damage and developmental changes induced by stress. Degrades polypeptides processively to yield small peptide fragments that are 5 to 10 amino acids long. Binds to DNA in a double-stranded, site-specific manner. The chain is Lon protease from Solibacter usitatus (strain Ellin6076).